Reading from the N-terminus, the 213-residue chain is AN1-type zinc finger protein 5 (213 aa).

Residues 8–42 (TPGPMLCSTGCGFYGNPRTNGMCSVCYKEHLQRQQ) form an A20-type zinc finger. Zn(2+) is bound by residues Cys14, Cys18, Cys30, and Cys33. A disordered region spans residues 39-149 (QRQQNSGRMS…EEKAPELPKP (111 aa)). Polar residues predominate over residues 40–66 (RQQNSGRMSPMGTASGSNSPTSDSASV). Phosphoserine occurs at positions 48 and 58. The span at 120–138 (SEPVVTQPSPSVSQPSSSQ) shows a compositional bias: low complexity. A compositionally biased stretch (basic and acidic residues) spans 139-148 (SEEKAPELPK). The segment at 148-194 (KPKKNRCFMCRKKVGLTGFDCRCGNLFCGLHRYSDKHNCPYDYKAEA) adopts an AN1-type zinc-finger fold. The Zn(2+) site is built by Cys154, Cys157, Cys168, Cys170, Cys175, His178, His184, and Cys186. Position 209 is an N6-acetyllysine (Lys209).

Homooligomer and/or heterooligomer. Interacts (via A20-type domain) with IKBKG and RIPK1 and with TRAF6 (via AN1-type domain). Interacts with ubiquitin and polyubiquitinated proteins. Identified in a heterotrimeric complex with ubiquitin and SQSTM1, where ZFAND5 and SQSTM1 both interact with the same ubiquitin molecule.

The protein resides in the cytoplasm. Involved in protein degradation via the ubiquitin-proteasome system. May act by anchoring ubiquitinated proteins to the proteasome. Plays a role in ubiquitin-mediated protein degradation during muscle atrophy. Plays a role in the regulation of NF-kappa-B activation and apoptosis. Inhibits NF-kappa-B activation triggered by overexpression of RIPK1 and TRAF6 but not of RELA. Also inhibits tumor necrosis factor (TNF), IL-1 and TLR4-induced NF-kappa-B activation in a dose-dependent manner. Overexpression sensitizes cells to TNF-induced apoptosis. Is a potent inhibitory factor for osteoclast differentiation. This chain is AN1-type zinc finger protein 5 (Zfand5), found in Rattus norvegicus (Rat).